Here is a 137-residue protein sequence, read N- to C-terminus: uncharacterized protein (137 aa).

Belongs to the ycf72 family.

The protein resides in the plastid. It localises to the chloroplast. This is an uncharacterized protein from Zea mays (Maize).